A 173-amino-acid chain; its full sequence is ATP-dependent protease subunit HslV (173 aa).

The active site involves Thr2. Na(+) contacts are provided by Gly158, Asp161, and Thr164.

This sequence belongs to the peptidase T1B family. HslV subfamily. A double ring-shaped homohexamer of HslV is capped on each side by a ring-shaped HslU homohexamer. The assembly of the HslU/HslV complex is dependent on binding of ATP.

Its subcellular location is the cytoplasm. It carries out the reaction ATP-dependent cleavage of peptide bonds with broad specificity.. Allosterically activated by HslU binding. Its function is as follows. Protease subunit of a proteasome-like degradation complex believed to be a general protein degrading machinery. The sequence is that of ATP-dependent protease subunit HslV from Actinobacillus succinogenes (strain ATCC 55618 / DSM 22257 / CCUG 43843 / 130Z).